The following is a 201-amino-acid chain: FMN-dependent NADH:quinone oxidoreductase (201 aa).

Residues Ser10, 16-18, and 96-99 contribute to the FMN site; these read SQS and MYNF.

Belongs to the azoreductase type 1 family. As to quaternary structure, homodimer. The cofactor is FMN.

The catalysed reaction is 2 a quinone + NADH + H(+) = 2 a 1,4-benzosemiquinone + NAD(+). It catalyses the reaction N,N-dimethyl-1,4-phenylenediamine + anthranilate + 2 NAD(+) = 2-(4-dimethylaminophenyl)diazenylbenzoate + 2 NADH + 2 H(+). Its function is as follows. Quinone reductase that provides resistance to thiol-specific stress caused by electrophilic quinones. In terms of biological role, also exhibits azoreductase activity. Catalyzes the reductive cleavage of the azo bond in aromatic azo compounds to the corresponding amines. The polypeptide is FMN-dependent NADH:quinone oxidoreductase (Sodalis glossinidius (strain morsitans)).